A 414-amino-acid chain; its full sequence is MNRQVVTSTLGRRGVASTILNAQQQQRPFSSTTTRCAAEDDSKKPAAAPSTPRAAAPGPISASRQKSEAAVGKLTQLRGSFTSLTNDNSFHKTLPAGARDARRLAAAPIAGKGAGAGAVAPLGGGGGASGAPKVINVRSLKGTLGSRGSNNIPGAVAPGAALRPRFAAGPGAAAGRPRFGAAASPGAGPTGAARRPPFGARRARPAGDKKRSGGSGDKRPRGDDYDAPPTEEEKAFLRGLEQGKVTEYVPKLTPDTLLGYGPPVATDAALGKVESAMRTMRILGGGLPFNDQSGVTSDPTAIKHRYVHEKKPVFFSSVEEKEWVRESLDKFAVSEGPEKKTKQKILETSVLGKYEEPKYVESLTETVKMVEKYQGGTFSYAPSDADKFNKKLNQLLAAGLPRAAPAPAQAQKKA.

Over residues 20–35 (LNAQQQQRPFSSTTTR) the composition is skewed to polar residues. Disordered regions lie at residues 20-71 (LNAQ…EAAV) and 168-229 (AGPG…DAPP). 2 stretches are compositionally biased toward low complexity: residues 45-59 (PAAA…APGP) and 168-200 (AGPG…PFGA). Positions 205 to 224 (PAGDKKRSGGSGDKRPRGDD) are enriched in basic and acidic residues.

Belongs to the mitochondrion-specific ribosomal protein mS46 family. Component of the mitochondrial small ribosomal subunit (mt-SSU). Mature N.crassa 74S mitochondrial ribosomes consist of a small (37S) and a large (54S) subunit. The 37S small subunit contains a 16S ribosomal RNA (16S mt-rRNA) and 32 different proteins. The 54S large subunit contains a 23S rRNA (23S mt-rRNA) and 42 different proteins.

It localises to the mitochondrion. Component of the mitochondrial ribosome (mitoribosome), a dedicated translation machinery responsible for the synthesis of mitochondrial genome-encoded proteins, including at least some of the essential transmembrane subunits of the mitochondrial respiratory chain. The mitoribosomes are attached to the mitochondrial inner membrane and translation products are cotranslationally integrated into the membrane. The chain is Small ribosomal subunit protein mS46 (rsm28) from Neurospora crassa (strain ATCC 24698 / 74-OR23-1A / CBS 708.71 / DSM 1257 / FGSC 987).